We begin with the raw amino-acid sequence, 232 residues long: Pyridoxine 5'-phosphate synthase (232 aa).

Asn7 lines the 3-amino-2-oxopropyl phosphate pocket. 9-10 (DH) is a binding site for 1-deoxy-D-xylulose 5-phosphate. Arg18 lines the 3-amino-2-oxopropyl phosphate pocket. His43 functions as the Proton acceptor in the catalytic mechanism. 1-deoxy-D-xylulose 5-phosphate is bound by residues Arg45 and His50. Glu69 acts as the Proton acceptor in catalysis. 1-deoxy-D-xylulose 5-phosphate is bound at residue Thr99. Catalysis depends on His185, which acts as the Proton donor. 3-amino-2-oxopropyl phosphate contacts are provided by residues Gly186 and 207–208 (GH).

It belongs to the PNP synthase family. In terms of assembly, homooctamer; tetramer of dimers.

It is found in the cytoplasm. The catalysed reaction is 3-amino-2-oxopropyl phosphate + 1-deoxy-D-xylulose 5-phosphate = pyridoxine 5'-phosphate + phosphate + 2 H2O + H(+). Its pathway is cofactor biosynthesis; pyridoxine 5'-phosphate biosynthesis; pyridoxine 5'-phosphate from D-erythrose 4-phosphate: step 5/5. Catalyzes the complicated ring closure reaction between the two acyclic compounds 1-deoxy-D-xylulose-5-phosphate (DXP) and 3-amino-2-oxopropyl phosphate (1-amino-acetone-3-phosphate or AAP) to form pyridoxine 5'-phosphate (PNP) and inorganic phosphate. The sequence is that of Pyridoxine 5'-phosphate synthase from Gluconobacter oxydans (strain 621H) (Gluconobacter suboxydans).